We begin with the raw amino-acid sequence, 336 residues long: Glycerol-3-phosphate dehydrogenase [NAD(P)+] (336 aa).

Serine 13, tryptophan 14, arginine 34, and lysine 108 together coordinate NADPH. The sn-glycerol 3-phosphate site is built by lysine 108, glycine 138, and serine 140. Alanine 142 is a binding site for NADPH. Lysine 193, aspartate 246, serine 256, arginine 257, and asparagine 258 together coordinate sn-glycerol 3-phosphate. Lysine 193 serves as the catalytic Proton acceptor. Arginine 257 contributes to the NADPH binding site. Residues valine 281 and glutamate 283 each coordinate NADPH.

Belongs to the NAD-dependent glycerol-3-phosphate dehydrogenase family.

It is found in the cytoplasm. It carries out the reaction sn-glycerol 3-phosphate + NAD(+) = dihydroxyacetone phosphate + NADH + H(+). It catalyses the reaction sn-glycerol 3-phosphate + NADP(+) = dihydroxyacetone phosphate + NADPH + H(+). The protein operates within membrane lipid metabolism; glycerophospholipid metabolism. Functionally, catalyzes the reduction of the glycolytic intermediate dihydroxyacetone phosphate (DHAP) to sn-glycerol 3-phosphate (G3P), the key precursor for phospholipid synthesis. The protein is Glycerol-3-phosphate dehydrogenase [NAD(P)+] of Carboxydothermus hydrogenoformans (strain ATCC BAA-161 / DSM 6008 / Z-2901).